The primary structure comprises 440 residues: Thymidine phosphorylase (440 aa).

Belongs to the thymidine/pyrimidine-nucleoside phosphorylase family. As to quaternary structure, homodimer.

The catalysed reaction is thymidine + phosphate = 2-deoxy-alpha-D-ribose 1-phosphate + thymine. Its pathway is pyrimidine metabolism; dTMP biosynthesis via salvage pathway; dTMP from thymine: step 1/2. Functionally, the enzymes which catalyze the reversible phosphorolysis of pyrimidine nucleosides are involved in the degradation of these compounds and in their utilization as carbon and energy sources, or in the rescue of pyrimidine bases for nucleotide synthesis. The protein is Thymidine phosphorylase of Yersinia pestis.